The sequence spans 245 residues: tRNA pseudouridine synthase A (245 aa).

The active-site Nucleophile is the D52. Y111 is a substrate binding site.

Belongs to the tRNA pseudouridine synthase TruA family. As to quaternary structure, homodimer.

It catalyses the reaction uridine(38/39/40) in tRNA = pseudouridine(38/39/40) in tRNA. Functionally, formation of pseudouridine at positions 38, 39 and 40 in the anticodon stem and loop of transfer RNAs. The sequence is that of tRNA pseudouridine synthase A from Wolbachia pipientis wMel.